Here is a 217-residue protein sequence, read N- to C-terminus: MTPLTTGWHPALSPRAEEGDTPPSRFDDHLAAQLLAQRIVLLGTQVDEVSANRVCAQLLLLSAEDSRTDISLYINSPGGSVTAGLAIYDTMRLIPNDVSTLAMGFAASMGQFLLSVGAAGKRFALPNARIMMHQPSAGIGGTTADIEIQAENLEFTKKAIERITAEHTGQSEETISRDGDRDRWFTAEQAKEYGMVDRVVESLDDVRPTASRRRMGL.

Residues 1-24 (MTPLTTGWHPALSPRAEEGDTPPS) are disordered. The Nucleophile role is filled by Ser108. His133 is a catalytic residue.

This sequence belongs to the peptidase S14 family. In terms of assembly, fourteen ClpP subunits assemble into 2 heptameric rings which stack back to back to give a disk-like structure with a central cavity, resembling the structure of eukaryotic proteasomes.

It is found in the cytoplasm. It carries out the reaction Hydrolysis of proteins to small peptides in the presence of ATP and magnesium. alpha-casein is the usual test substrate. In the absence of ATP, only oligopeptides shorter than five residues are hydrolyzed (such as succinyl-Leu-Tyr-|-NHMec, and Leu-Tyr-Leu-|-Tyr-Trp, in which cleavage of the -Tyr-|-Leu- and -Tyr-|-Trp bonds also occurs).. In terms of biological role, cleaves peptides in various proteins in a process that requires ATP hydrolysis. Has a chymotrypsin-like activity. Plays a major role in the degradation of misfolded proteins. The sequence is that of ATP-dependent Clp protease proteolytic subunit 1 from Streptomyces avermitilis (strain ATCC 31267 / DSM 46492 / JCM 5070 / NBRC 14893 / NCIMB 12804 / NRRL 8165 / MA-4680).